We begin with the raw amino-acid sequence, 290 residues long: Lipoyl synthase 2 (290 aa).

[4Fe-4S] cluster is bound by residues C37, C42, C48, C63, C67, C70, and S283. Residues 49–272 (YGQKTATFLL…GNIARELGFS (224 aa)) form the Radical SAM core domain.

The protein belongs to the radical SAM superfamily. Lipoyl synthase family. The cofactor is [4Fe-4S] cluster.

The protein localises to the cytoplasm. The enzyme catalyses [[Fe-S] cluster scaffold protein carrying a second [4Fe-4S](2+) cluster] + N(6)-octanoyl-L-lysyl-[protein] + 2 oxidized [2Fe-2S]-[ferredoxin] + 2 S-adenosyl-L-methionine + 4 H(+) = [[Fe-S] cluster scaffold protein] + N(6)-[(R)-dihydrolipoyl]-L-lysyl-[protein] + 4 Fe(3+) + 2 hydrogen sulfide + 2 5'-deoxyadenosine + 2 L-methionine + 2 reduced [2Fe-2S]-[ferredoxin]. The protein operates within protein modification; protein lipoylation via endogenous pathway; protein N(6)-(lipoyl)lysine from octanoyl-[acyl-carrier-protein]: step 2/2. Catalyzes the radical-mediated insertion of two sulfur atoms into the C-6 and C-8 positions of the octanoyl moiety bound to the lipoyl domains of lipoate-dependent enzymes, thereby converting the octanoylated domains into lipoylated derivatives. This Thermosynechococcus vestitus (strain NIES-2133 / IAM M-273 / BP-1) protein is Lipoyl synthase 2.